Reading from the N-terminus, the 233-residue chain is uncharacterized protein (233 aa).

6 consecutive transmembrane segments (helical) span residues 7-27 (VPIF…LLAY), 36-56 (YEFE…ILIP), 62-82 (MFVL…KYLA), 119-139 (LIIA…AILM), 159-179 (PLYP…VGLV), and 188-208 (ILLA…APHI).

Its subcellular location is the cell membrane. This is an uncharacterized protein from Methanocaldococcus jannaschii (strain ATCC 43067 / DSM 2661 / JAL-1 / JCM 10045 / NBRC 100440) (Methanococcus jannaschii).